Consider the following 195-residue polypeptide: Probable thymidylate kinase (195 aa).

Position 7-14 (7-14 (GIDGVGKT)) interacts with ATP.

It belongs to the thymidylate kinase family.

It carries out the reaction dTMP + ATP = dTDP + ADP. This is Probable thymidylate kinase from Methanosphaera stadtmanae (strain ATCC 43021 / DSM 3091 / JCM 11832 / MCB-3).